Consider the following 618-residue polypeptide: Very-long-chain aldehyde decarbonylase GL1-3 (618 aa).

Helical transmembrane passes span 9-29 (LSSWPWAFLGSYKYLLYGPVV), 46-66 (TSWCLHLILLLALRSLTMLFF), 91-111 (MVIMQTLIAAVLVTSRVFPAT), 121-141 (GWAIAVVLHVAVSEPAFYWAH), 174-194 (LESLILTLVAWAPLAGAFMAG), 289-309 (DFVFLVHVVDVVSSMHVPFAF), and 315-335 (LPFATHLVLLPLWPIAFGFML). Residues 127–267 (VLHVAVSEPA…MPLFDALGGT (141 aa)) enclose the Fatty acid hydroxylase domain.

Belongs to the sterol desaturase family. In terms of assembly, homodimer. As to expression, expressed in germinating seeds and stamens.

It localises to the endoplasmic reticulum membrane. The catalysed reaction is a long-chain fatty aldehyde + 2 NADPH + O2 + H(+) = a long-chain alkane + formate + 2 NADP(+) + H2O. In terms of biological role, aldehyde decarbonylase involved in the conversion of aldehydes to alkanes. Core component of a very-long-chain alkane synthesis complex. This Oryza sativa subsp. japonica (Rice) protein is Very-long-chain aldehyde decarbonylase GL1-3.